A 625-amino-acid chain; its full sequence is Beta-galactosidase large subunit (625 aa).

Glu-465 acts as the Proton donor in catalysis. The Nucleophile role is filled by Glu-533.

This sequence belongs to the glycosyl hydrolase 2 family. In terms of assembly, heterodimer of a large (LacL) and a small subunit (LacM).

It carries out the reaction Hydrolysis of terminal non-reducing beta-D-galactose residues in beta-D-galactosides.. Its function is as follows. Component of a beta-galactosidase. The protein is Beta-galactosidase large subunit of Latilactobacillus sakei (Lactobacillus sakei).